A 208-amino-acid chain; its full sequence is GTP cyclohydrolase 1 (208 aa).

The Zn(2+) site is built by cysteine 89, histidine 92, and cysteine 163.

It belongs to the GTP cyclohydrolase I family. As to quaternary structure, homomer.

It carries out the reaction GTP + H2O = 7,8-dihydroneopterin 3'-triphosphate + formate + H(+). It participates in cofactor biosynthesis; 7,8-dihydroneopterin triphosphate biosynthesis; 7,8-dihydroneopterin triphosphate from GTP: step 1/1. This is GTP cyclohydrolase 1 from Saccharolobus islandicus (strain L.S.2.15 / Lassen #1) (Sulfolobus islandicus).